Here is a 721-residue protein sequence, read N- to C-terminus: Phosphomethylpyrimidine synthase (721 aa).

Substrate-binding positions include N256, M285, Y314, H350, S370 to G372, D411 to R414, and E450. H454 lines the Zn(2+) pocket. Y477 lines the substrate pocket. Zn(2+) is bound at residue H518. [4Fe-4S] cluster is bound by residues C598, C601, and C606.

The protein belongs to the ThiC family. Homodimer. [4Fe-4S] cluster is required as a cofactor.

It catalyses the reaction 5-amino-1-(5-phospho-beta-D-ribosyl)imidazole + S-adenosyl-L-methionine = 4-amino-2-methyl-5-(phosphooxymethyl)pyrimidine + CO + 5'-deoxyadenosine + formate + L-methionine + 3 H(+). The protein operates within cofactor biosynthesis; thiamine diphosphate biosynthesis. In terms of biological role, catalyzes the synthesis of the hydroxymethylpyrimidine phosphate (HMP-P) moiety of thiamine from aminoimidazole ribotide (AIR) in a radical S-adenosyl-L-methionine (SAM)-dependent reaction. The sequence is that of Phosphomethylpyrimidine synthase from Shewanella oneidensis (strain ATCC 700550 / JCM 31522 / CIP 106686 / LMG 19005 / NCIMB 14063 / MR-1).